The chain runs to 58 residues: uncharacterized protein (58 aa).

Its subcellular location is the plastid. It is found in the chloroplast. This is an uncharacterized protein from Porphyra purpurea (Red seaweed).